The chain runs to 342 residues: Probable receptor-like protein kinase At4g10390 (342 aa).

One can recognise a Protein kinase domain in the interval 41–336 (SNFSRLIGSG…IKEIPSLSFL (296 aa)). ATP is bound by residues 47–55 (IGSGGYSSI) and K69. The Proton acceptor role is filled by D165. A phosphoserine mark is found at S169 and S201. The residue at position 220 (Y220) is a Phosphotyrosine.

Belongs to the protein kinase superfamily. Ser/Thr protein kinase family.

It carries out the reaction L-seryl-[protein] + ATP = O-phospho-L-seryl-[protein] + ADP + H(+). The catalysed reaction is L-threonyl-[protein] + ATP = O-phospho-L-threonyl-[protein] + ADP + H(+). The protein is Probable receptor-like protein kinase At4g10390 of Arabidopsis thaliana (Mouse-ear cress).